A 391-amino-acid chain; its full sequence is Matrix metalloproteinase-23 (391 aa).

Topologically, residues 1 to 19 are cytoplasmic; it reads MGWRACLRPEASGAVQGRW. A propeptide spanning residues 1 to 79 is cleaved from the precursor; sequence MGWRACLRPE…LSMLVTRRRR (79 aa). Residues 20-38 traverse the membrane as a helical; Signal-anchor for type II membrane protein segment; it reads LGAVLSGLCLLSALAFLEW. Over 39–391 the chain is Lumenal; that stretch reads LGSPTETAWN…TYSWRVRVRS (353 aa). N-linked (GlcNAc...) asparagine glycosylation is found at N93 and N149. A Zn(2+)-binding site is contributed by H212. The active site involves E213. Zn(2+)-binding residues include H216 and H222. N233 carries N-linked (GlcNAc...) asparagine glycosylation. A ShKT domain is found at 256–290; sequence CLDRIFVCTSWARKGFCDVRQRLMKRLCPRSCDFC. 3 disulfide bridges follow: C256–C290, C263–C283, and C272–C287. An Ig-like C2-type domain is found at 296–381; the sequence is PTVATTTSPT…VVRHRQRVLT (86 aa). N-linked (GlcNAc...) asparagine glycosylation occurs at N317. C322 and C371 form a disulfide bridge.

Belongs to the peptidase M10A family. Requires Zn(2+) as cofactor. N-glycosylated. Post-translationally, proteolytic cleavage might yield an active form. Expressed at the highest levels in ovary and uterus. In ovary expression is strictly confined to granulosa cells of preantral and small antral follicles. Detected also in testis and prostate.

The protein localises to the membrane. It localises to the endoplasmic reticulum membrane. With respect to regulation, inhibited by TIMP2. In terms of biological role, protease. May regulate the surface expression of some potassium channels by retaining them in the endoplasmic reticulum. The protein is Matrix metalloproteinase-23 (Mmp23) of Rattus norvegicus (Rat).